The sequence spans 437 residues: Lipid II isoglutaminyl synthase (glutamine-hydrolyzing) subunit MurT (437 aa).

Zn(2+)-binding residues include Cys202, Cys205, Cys224, and Cys226. Asp349 is a catalytic residue.

Belongs to the MurCDEF family. MurT subfamily. In terms of assembly, forms a heterodimer with GatD.

The enzyme catalyses beta-D-GlcNAc-(1-&gt;4)-Mur2Ac(oyl-L-Ala-gamma-D-Glu-L-Lys-D-Ala-D-Ala)-di-trans,octa-cis-undecaprenyl diphosphate + L-glutamine + ATP + H2O = beta-D-GlcNAc-(1-&gt;4)-Mur2Ac(oyl-L-Ala-D-isoglutaminyl-L-Lys-D-Ala-D-Ala)-di-trans,octa-cis-undecaprenyl diphosphate + L-glutamate + ADP + phosphate + H(+). It carries out the reaction beta-D-GlcNAc-(1-&gt;4)-Mur2Ac(oyl-L-Ala-gamma-D-Glu-L-Lys-D-Ala-D-Ala)-di-trans,octa-cis-undecaprenyl diphosphate + ATP = beta-D-GlcNAc-(1-&gt;4)-Mur2Ac(oyl-L-Ala-gamma-D-O-P-Glu-L-Lys-D-Ala-D-Ala)-di-trans,octa-cis-undecaprenyl diphosphate + ADP. It catalyses the reaction beta-D-GlcNAc-(1-&gt;4)-Mur2Ac(oyl-L-Ala-gamma-D-O-P-Glu-L-Lys-D-Ala-D-Ala)-di-trans,octa-cis-undecaprenyl diphosphate + NH4(+) = beta-D-GlcNAc-(1-&gt;4)-Mur2Ac(oyl-L-Ala-D-isoglutaminyl-L-Lys-D-Ala-D-Ala)-di-trans,octa-cis-undecaprenyl diphosphate + phosphate + H(+). It participates in cell wall biogenesis; peptidoglycan biosynthesis. The lipid II isoglutaminyl synthase complex catalyzes the formation of alpha-D-isoglutamine in the cell wall lipid II stem peptide. The MurT subunit catalyzes the ATP-dependent amidation of D-glutamate residue of lipid II, converting it to an isoglutamine residue. The chain is Lipid II isoglutaminyl synthase (glutamine-hydrolyzing) subunit MurT from Staphylococcus aureus (strain COL).